A 335-amino-acid polypeptide reads, in one-letter code: Methionine import ATP-binding protein MetN 1 (335 aa).

The ABC transporter domain maps to 2–242 (IEFQQVHKTY…PQHPTTKRFV (241 aa)). 38 to 45 (GHSGAGKS) contributes to the ATP binding site.

It belongs to the ABC transporter superfamily. Methionine importer (TC 3.A.1.24) family. In terms of assembly, the complex is composed of two ATP-binding proteins (MetN), two transmembrane proteins (MetI) and a solute-binding protein (MetQ).

It localises to the cell inner membrane. The enzyme catalyses L-methionine(out) + ATP + H2O = L-methionine(in) + ADP + phosphate + H(+). The catalysed reaction is D-methionine(out) + ATP + H2O = D-methionine(in) + ADP + phosphate + H(+). Its function is as follows. Part of the ABC transporter complex MetNIQ involved in methionine import. Responsible for energy coupling to the transport system. In Pseudomonas putida (strain ATCC 47054 / DSM 6125 / CFBP 8728 / NCIMB 11950 / KT2440), this protein is Methionine import ATP-binding protein MetN 1.